The sequence spans 464 residues: Serine protease PepD (464 aa).

The tract at residues 1 to 71 (MAKLARVVGL…TQYRQPYEAL (71 aa)) is disordered. Residues 1-100 (MAKLARVVGL…GMVRQRPRAG (100 aa)) lie on the Cytoplasmic side of the membrane. Low complexity predominate over residues 39–48 (QGQQQTYSQQ). The helical transmembrane segment at 101 to 121 (MLAIGAVTIAVVSAGIGGAAA) threads the bilayer. Over 122–464 (SLVGFNRAPA…VQVTLGKAEQ (343 aa)) the chain is Periplasmic. Active-site charge relay system residues include His197, Asp236, and Ser317. In terms of domain architecture, PDZ spans 368 to 449 (LISTGKASHA…TVALTFQDPS (82 aa)).

Belongs to the peptidase S1C family. Homotrimer. Interacts with numerous proteins, including the 35 kDa antigen PspA.

It is found in the cell inner membrane. Its subcellular location is the secreted. The protein localises to the cell wall. It carries out the reaction Acts on substrates that are at least partially unfolded. The cleavage site P1 residue is normally between a pair of hydrophobic residues, such as Val-|-Val.. Its activity is regulated as follows. Probably regulates its own activity by autocleavage, which removes the PDZ domain. Inhibited by the serine protease inhibitor diisopropylfluorophosphate (DFP). Inhibited by fluoroquinolone such as ciprofloxacin, moxifloxacin and ofloxacin and their analogs. Functionally, required for virulence. Acts both as a protease, which degrades and/or refolds damaged substrate targets, and as a chaperone. Plays an important role in the stress response network mediated through the two-component regulatory system MprAB and SigE signaling networks. May utilize its PDZ domain to recognize and process misfolded proteins at the cell membrane, leading to activation of the MprAB and SigE signaling pathways and subsequent establishment of a positive feedback loop that facilitates bacterial adaptation. Interacts with and potentially cleaves several proteins, including the 35 kDa antigen PspA. Proteolytic cleavage of PspA may help to maintain cell envelope homeostasis in Mycobacterium and regulate specific stress response pathways during periods of extracytoplasmic stress. In vitro, exhibits proteolytic activity against the artificial substrate beta-casein. The sequence is that of Serine protease PepD from Mycobacterium tuberculosis (strain ATCC 25618 / H37Rv).